Here is a 471-residue protein sequence, read N- to C-terminus: ATP synthase subunit beta (471 aa).

An ATP-binding site is contributed by 157–164 (GGAGVGKT).

Belongs to the ATPase alpha/beta chains family. In terms of assembly, F-type ATPases have 2 components, CF(1) - the catalytic core - and CF(0) - the membrane proton channel. CF(1) has five subunits: alpha(3), beta(3), gamma(1), delta(1), epsilon(1). CF(0) has three main subunits: a(1), b(2) and c(9-12). The alpha and beta chains form an alternating ring which encloses part of the gamma chain. CF(1) is attached to CF(0) by a central stalk formed by the gamma and epsilon chains, while a peripheral stalk is formed by the delta and b chains.

It localises to the cell inner membrane. It carries out the reaction ATP + H2O + 4 H(+)(in) = ADP + phosphate + 5 H(+)(out). Its function is as follows. Produces ATP from ADP in the presence of a proton gradient across the membrane. The catalytic sites are hosted primarily by the beta subunits. This is ATP synthase subunit beta from Trichlorobacter lovleyi (strain ATCC BAA-1151 / DSM 17278 / SZ) (Geobacter lovleyi).